Here is a 103-residue protein sequence, read N- to C-terminus: MLGSAGTLLLLLLAWGARALSQPDDNRITTGRNQDLNAIQQDLLLKLLSGWTDSRESNLVEVERNVPDPPEPKIPPSVKFPRLSLRERKAPCKNFFWKTFTMC.

Positions 1–21 (MLGSAGTLLLLLLAWGARALS) are cleaved as a signal peptide. Positions 22–87 (QPDDNRITTG…VKFPRLSLRE (66 aa)) are excised as a propeptide. Cys-92 and Cys-103 form a disulfide bridge.

It belongs to the somatostatin family.

The protein localises to the secreted. Its function is as follows. Somatostatin inhibits the release of somatotropin. The chain is Somatostatin-2 (sst2) from Pelophylax ridibundus (Marsh frog).